Consider the following 160-residue polypeptide: Large ribosomal subunit protein uL11 (160 aa).

Belongs to the universal ribosomal protein uL11 family. Part of the ribosomal stalk of the 50S ribosomal subunit. Interacts with L10 and the large rRNA to form the base of the stalk. L10 forms an elongated spine to which L12 dimers bind in a sequential fashion forming a multimeric L10(L12)X complex.

Its function is as follows. Forms part of the ribosomal stalk which helps the ribosome interact with GTP-bound translation factors. The protein is Large ribosomal subunit protein uL11 of Methanococcus aeolicus (strain ATCC BAA-1280 / DSM 17508 / OCM 812 / Nankai-3).